The following is an 86-amino-acid chain: Small ribosomal subunit protein uS17 (86 aa).

Belongs to the universal ribosomal protein uS17 family. Part of the 30S ribosomal subunit.

In terms of biological role, one of the primary rRNA binding proteins, it binds specifically to the 5'-end of 16S ribosomal RNA. The polypeptide is Small ribosomal subunit protein uS17 (Streptococcus mutans serotype c (strain ATCC 700610 / UA159)).